A 271-amino-acid chain; its full sequence is Chymotrypsin-like elastase family member 2A (271 aa).

The first 16 residues, 1 to 16 (MIRTLLLSALVAGALS), serve as a signal peptide directing secretion. Residues 17–30 (CGYPTYEVQHDVSR) constitute a propeptide, activation peptide. In terms of domain architecture, Peptidase S1 spans 31–269 (VVGGQEASPN…YIDWINSVIA (239 aa)). Cysteine 60 and cysteine 76 are joined by a disulfide. Catalysis depends on charge relay system residues histidine 75 and aspartate 123. Disulfide bonds link cysteine 157–cysteine 224, cysteine 188–cysteine 204, and cysteine 214–cysteine 245. The active-site Charge relay system is the serine 218.

Belongs to the peptidase S1 family. Elastase subfamily. In terms of assembly, interacts with CPA1. Interacts with SERPINA1. Pancreas.

It is found in the secreted. The catalysed reaction is Preferential cleavage: Leu-|-Xaa, Met-|-Xaa and Phe-|-Xaa. Hydrolyzes elastin.. In terms of biological role, elastase that enhances insulin signaling and might have a physiologic role in cellular glucose metabolism. Circulates in plasma and reduces platelet hyperactivation, triggers both insulin secretion and degradation, and increases insulin sensitivity. The protein is Chymotrypsin-like elastase family member 2A (Cela2a) of Rattus norvegicus (Rat).